The following is a 310-amino-acid chain: Zinc transporter ZIP9 (310 aa).

8 helical membrane passes run 7-27 (ISLL…IPLA), 35-55 (LKLI…AVII), 108-128 (ACIG…DQIG), 148-168 (ITTT…LGAA), 178-198 (LIVF…LVSF), 212-232 (HLLV…LGLS), 246-266 (GVAM…HVLP), and 289-309 (VEVV…VGHH).

The protein belongs to the ZIP transporter (TC 2.A.5) family. Expressed in brain, liver, ovary, and testis.

It is found in the golgi apparatus. Its subcellular location is the trans-Golgi network membrane. The protein localises to the cell membrane. The protein resides in the cytoplasm. It localises to the perinuclear region. It is found in the mitochondrion. Its subcellular location is the nucleus. It catalyses the reaction Zn(2+)(in) = Zn(2+)(out). Functionally, has dual functions as a membrane-bound androgen receptor and as an androgen-dependent zinc transporter both of which are mediated through G protein activation and are required for the androgen-dependent apoptotic response. Upon androgen binding, mediates apoptosis by directly activating a stimulatory G protein that leads to increased cAMP levels and MAP kinase activity and which is accompanied by increased intracellular free zinc levels. This chain is Zinc transporter ZIP9, found in Micropogonias undulatus (Atlantic croaker).